A 37-amino-acid chain; its full sequence is Large ribosomal subunit protein bL36 (37 aa).

It belongs to the bacterial ribosomal protein bL36 family.

This Mycoplasma genitalium (strain ATCC 33530 / DSM 19775 / NCTC 10195 / G37) (Mycoplasmoides genitalium) protein is Large ribosomal subunit protein bL36.